The following is a 753-amino-acid chain: 5-methyltetrahydropteroyltriglutamate--homocysteine methyltransferase (753 aa).

5-methyltetrahydropteroyltri-L-glutamate contacts are provided by residues 17 to 20 (RELK) and K117. L-homocysteine contacts are provided by residues 431–433 (IGS) and E484. Residues 431–433 (IGS) and E484 contribute to the L-methionine site. Residues 515-516 (RC) and W561 each bind 5-methyltetrahydropteroyltri-L-glutamate. Residue D599 participates in L-homocysteine binding. D599 provides a ligand contact to L-methionine. E605 contacts 5-methyltetrahydropteroyltri-L-glutamate. Positions 641, 643, and 665 each coordinate Zn(2+). H694 acts as the Proton donor in catalysis. C726 lines the Zn(2+) pocket.

Belongs to the vitamin-B12 independent methionine synthase family. Zn(2+) is required as a cofactor.

The enzyme catalyses 5-methyltetrahydropteroyltri-L-glutamate + L-homocysteine = tetrahydropteroyltri-L-glutamate + L-methionine. The protein operates within amino-acid biosynthesis; L-methionine biosynthesis via de novo pathway; L-methionine from L-homocysteine (MetE route): step 1/1. Functionally, catalyzes the transfer of a methyl group from 5-methyltetrahydrofolate to homocysteine resulting in methionine formation. This chain is 5-methyltetrahydropteroyltriglutamate--homocysteine methyltransferase, found in Escherichia coli O157:H7.